Consider the following 940-residue polypeptide: Translation initiation factor IF-2 (940 aa).

2 disordered regions span residues E48–K264 and Q278–K351. 5 stretches are compositionally biased toward basic and acidic residues: residues S65–V95, F112–A125, N155–A206, R232–E258, and A292–N301. The segment covering N314–N332 has biased composition (low complexity). The region spanning E442–E609 is the tr-type G domain. Positions G451–T458 are G1. G451–T458 contributes to the GTP binding site. A G2 region spans residues G476–H480. The G3 stretch occupies residues D497–G500. Residues D497–H501 and N551–D554 each bind GTP. The interval N551 to D554 is G4. Positions S587–K589 are G5.

The protein belongs to the TRAFAC class translation factor GTPase superfamily. Classic translation factor GTPase family. IF-2 subfamily.

The protein localises to the cytoplasm. Its function is as follows. One of the essential components for the initiation of protein synthesis. Protects formylmethionyl-tRNA from spontaneous hydrolysis and promotes its binding to the 30S ribosomal subunits. Also involved in the hydrolysis of GTP during the formation of the 70S ribosomal complex. This Streptococcus suis (strain 98HAH33) protein is Translation initiation factor IF-2.